The chain runs to 341 residues: Eukaryotic translation initiation factor 3 subunit I (341 aa).

5 WD repeats span residues 8 to 49 (GHER…GTYR), 50 to 91 (GHQG…KTWD), 135 to 184 (QSDE…LLYN), 189 to 228 (ELNQ…VLKS), and 286 to 325 (GHFG…YDFL).

The protein belongs to the eIF-3 subunit I family. As to quaternary structure, component of the eukaryotic translation initiation factor 3 (eIF-3) complex.

The protein localises to the cytoplasm. Component of the eukaryotic translation initiation factor 3 (eIF-3) complex, which is involved in protein synthesis of a specialized repertoire of mRNAs and, together with other initiation factors, stimulates binding of mRNA and methionyl-tRNAi to the 40S ribosome. The eIF-3 complex specifically targets and initiates translation of a subset of mRNAs involved in cell proliferation. The chain is Eukaryotic translation initiation factor 3 subunit I from Chaetomium globosum (strain ATCC 6205 / CBS 148.51 / DSM 1962 / NBRC 6347 / NRRL 1970) (Soil fungus).